We begin with the raw amino-acid sequence, 472 residues long: Flotillin-like protein 6 (472 aa).

Cysteine 37 carries S-palmitoyl cysteine lipidation. A coiled-coil region spans residues 237 to 327 (ENQREAEVAQ…ELYKKQKEAE (91 aa)).

It belongs to the band 7/mec-2 family. Flotillin subfamily. May be palmitoylated. Very low occasional expression in roots and nodules.

The protein resides in the cell membrane. The protein localises to the membrane. It localises to the caveola. Its function is as follows. May act as a scaffolding protein within caveolar membranes, functionally participating in formation of caveolae or caveolae-like vesicles. May be involved in nodule formation. In Medicago truncatula (Barrel medic), this protein is Flotillin-like protein 6 (FLOT6).